A 277-amino-acid polypeptide reads, in one-letter code: NH(3)-dependent NAD(+) synthetase (277 aa).

36–43 (GLSGGIDS) is an ATP binding site. Residue D42 participates in Mg(2+) binding. Residue R118 coordinates deamido-NAD(+). Residue T138 participates in ATP binding. E143 is a Mg(2+) binding site. The ATP site is built by K167 and S189.

It belongs to the NAD synthetase family. As to quaternary structure, homodimer.

It catalyses the reaction deamido-NAD(+) + NH4(+) + ATP = AMP + diphosphate + NAD(+) + H(+). The protein operates within cofactor biosynthesis; NAD(+) biosynthesis; NAD(+) from deamido-NAD(+) (ammonia route): step 1/1. Functionally, catalyzes the ATP-dependent amidation of deamido-NAD to form NAD. Uses ammonia as a nitrogen source. This chain is NH(3)-dependent NAD(+) synthetase, found in Chlorobium phaeobacteroides (strain BS1).